The chain runs to 109 residues: Thioredoxin (109 aa).

The 106-residue stretch at 2–107 (SISQVIDTSF…LLNTLQKHLK (106 aa)) folds into the Thioredoxin domain. Residues cysteine 31 and cysteine 34 each act as nucleophile in the active site. A disulfide bridge connects residues cysteine 31 and cysteine 34.

Belongs to the thioredoxin family.

The protein localises to the plastid. The protein resides in the chloroplast. Functionally, participates in various redox reactions through the reversible oxidation of its active center dithiol to a disulfide and catalyzes dithiol-disulfide exchange reactions. This chain is Thioredoxin (trxA), found in Griffithsia pacifica (Red alga).